A 940-amino-acid chain; its full sequence is Glutamate receptor 2.9 (940 aa).

The first 23 residues, 1 to 23 (MKTNNTFLSYFVCGFLLMGVGLG), serve as a signal peptide directing secretion. Topologically, residues 24–566 (QNQTSEIKVG…DTWVFLEPWS (543 aa)) are extracellular. Residues Asn25, Asn39, Asn115, Asn338, Asn345, and Asn528 are each glycosylated (N-linked (GlcNAc...) asparagine). The helical transmembrane segment at 567–587 (LELWVTTGCFFVFIGFVVWLF) threads the bilayer. Residues 588–596 (EHRVNTDFR) are Cytoplasmic-facing. Residues 597–617 (GPPQYQIGTSLWFSFSTMVFA) traverse the membrane as a helical segment. Over 618–628 (HRENVVSNLAR) the chain is Cytoplasmic. A helical transmembrane segment spans residues 629 to 649 (FVVVVWCFVVLVLTQSYTASL). Over 650-811 (TSFLTVQSLQ…NRLNLSSFLG (162 aa)) the chain is Extracellular. N-linked (GlcNAc...) asparagine glycosylation is found at Asn771, Asn776, and Asn805. The helical transmembrane segment at 812 to 832 (LFLIAGTAISFSLLVFVALFL) threads the bilayer. Topologically, residues 833 to 940 (YEHRHTLGDD…ESDIECRVEQ (108 aa)) are cytoplasmic. 2 disordered regions span residues 876 to 900 (ISSP…QSPS) and 914 to 940 (PSEE…RVEQ).

It belongs to the glutamate-gated ion channel (TC 1.A.10.1) family. In terms of assembly, may form heteromers. In terms of tissue distribution, expressed predominantly in roots.

The protein resides in the membrane. Functionally, glutamate-gated receptor that probably acts as a non-selective cation channel. May be involved in light-signal transduction and calcium homeostasis via the regulation of calcium influx into cells. The protein is Glutamate receptor 2.9 (GLR2.9) of Arabidopsis thaliana (Mouse-ear cress).